A 305-amino-acid polypeptide reads, in one-letter code: Aspartate carbamoyltransferase catalytic subunit (305 aa).

Carbamoyl phosphate-binding residues include Arg54 and Thr55. Lys83 contributes to the L-aspartate binding site. Positions 104, 132, and 135 each coordinate carbamoyl phosphate. Residues Arg165 and Arg226 each contribute to the L-aspartate site. Leu265 and Pro266 together coordinate carbamoyl phosphate.

It belongs to the aspartate/ornithine carbamoyltransferase superfamily. ATCase family. As to quaternary structure, heterooligomer of catalytic and regulatory chains.

The catalysed reaction is carbamoyl phosphate + L-aspartate = N-carbamoyl-L-aspartate + phosphate + H(+). Its pathway is pyrimidine metabolism; UMP biosynthesis via de novo pathway; (S)-dihydroorotate from bicarbonate: step 2/3. Its function is as follows. Catalyzes the condensation of carbamoyl phosphate and aspartate to form carbamoyl aspartate and inorganic phosphate, the committed step in the de novo pyrimidine nucleotide biosynthesis pathway. The sequence is that of Aspartate carbamoyltransferase catalytic subunit from Pyrobaculum arsenaticum (strain DSM 13514 / JCM 11321 / PZ6).